The chain runs to 118 residues: Small ribosomal subunit protein uS13 (118 aa).

The interval 94-118 (SLPLRGQRTKTNARTRKGPRKPIKK) is disordered.

Belongs to the universal ribosomal protein uS13 family. Part of the 30S ribosomal subunit. Forms a loose heterodimer with protein S19. Forms two bridges to the 50S subunit in the 70S ribosome.

Functionally, located at the top of the head of the 30S subunit, it contacts several helices of the 16S rRNA. In the 70S ribosome it contacts the 23S rRNA (bridge B1a) and protein L5 of the 50S subunit (bridge B1b), connecting the 2 subunits; these bridges are implicated in subunit movement. Contacts the tRNAs in the A and P-sites. The sequence is that of Small ribosomal subunit protein uS13 from Aliivibrio fischeri (strain ATCC 700601 / ES114) (Vibrio fischeri).